Here is a 79-residue protein sequence, read N- to C-terminus: Probable [Fe-S]-dependent transcriptional repressor (79 aa).

Iron-sulfur cluster contacts are provided by cysteine 56, cysteine 61, cysteine 64, and cysteine 71.

The protein belongs to the FeoC family.

May function as a transcriptional regulator that controls feoABC expression. The chain is Probable [Fe-S]-dependent transcriptional repressor from Klebsiella pneumoniae subsp. pneumoniae (strain ATCC 700721 / MGH 78578).